Consider the following 418-residue polypeptide: Inner capsid protein sigma-2 (418 aa).

This sequence belongs to the orthoreovirus sigma-1 protein family. In terms of assembly, interacts with protein mu-NS; in viral inclusions.

It is found in the virion. Its function is as follows. Inner capsid (core) component. This Mammalia (T1L) protein is Inner capsid protein sigma-2 (S2).